Reading from the N-terminus, the 62-residue chain is 6.7 kDa chloroplast outer envelope membrane protein (62 aa).

Over 1 to 17 (MESVAKPATTKEGSAKQ) the chain is Chloroplast intermembrane. Residues 18-40 (AAIVVGVLALGWFAIQVAFIPLF) traverse the membrane as a helical segment. Residues 41 to 62 (NKVRGGGSDKKDDDVNAFTPDT) lie on the Cytoplasmic side of the membrane.

The protein resides in the plastid. Its subcellular location is the chloroplast outer membrane. This is 6.7 kDa chloroplast outer envelope membrane protein from Spinacia oleracea (Spinach).